The chain runs to 205 residues: Small ribosomal subunit protein uS4 (205 aa).

The interval 19 to 45 is disordered; that stretch reads IWGRPKSPVNRREYGPGQHGQRRKGKL. The S4 RNA-binding domain occupies 94 to 157; the sequence is SRLDAVVYRA…KQLAIVLEAV (64 aa).

The protein belongs to the universal ribosomal protein uS4 family. In terms of assembly, part of the 30S ribosomal subunit. Contacts protein S5. The interaction surface between S4 and S5 is involved in control of translational fidelity.

Functionally, one of the primary rRNA binding proteins, it binds directly to 16S rRNA where it nucleates assembly of the body of the 30S subunit. With S5 and S12 plays an important role in translational accuracy. The protein is Small ribosomal subunit protein uS4 of Brucella melitensis biotype 2 (strain ATCC 23457).